The sequence spans 199 residues: Imidazole glycerol phosphate synthase subunit HisH 2 (199 aa).

The 199-residue stretch at 1–199 (MIAVIDVSGN…NNFLSLESTC (199 aa)) folds into the Glutamine amidotransferase type-1 domain. Catalysis depends on Cys76, which acts as the Nucleophile. Active-site residues include His177 and Glu179.

In terms of assembly, heterodimer of HisH and HisF.

The protein localises to the cytoplasm. The enzyme catalyses 5-[(5-phospho-1-deoxy-D-ribulos-1-ylimino)methylamino]-1-(5-phospho-beta-D-ribosyl)imidazole-4-carboxamide + L-glutamine = D-erythro-1-(imidazol-4-yl)glycerol 3-phosphate + 5-amino-1-(5-phospho-beta-D-ribosyl)imidazole-4-carboxamide + L-glutamate + H(+). It catalyses the reaction L-glutamine + H2O = L-glutamate + NH4(+). It participates in amino-acid biosynthesis; L-histidine biosynthesis; L-histidine from 5-phospho-alpha-D-ribose 1-diphosphate: step 5/9. Its function is as follows. IGPS catalyzes the conversion of PRFAR and glutamine to IGP, AICAR and glutamate. The HisH subunit provides the glutamine amidotransferase activity that produces the ammonia necessary to HisF for the synthesis of IGP and AICAR. This Legionella pneumophila (strain Paris) protein is Imidazole glycerol phosphate synthase subunit HisH 2.